The following is a 145-amino-acid chain: Lymphocyte antigen 6 complex locus protein G5c (145 aa).

The first 38 residues, 1 to 38 (MSGLAASWSLKPLGPHGVTQALCAVLLAVLVTMNVVLG), serve as a signal peptide directing secretion. Residues 55–145 (LHCYRCLLET…NPKNRKNTMH (91 aa)) form the UPAR/Ly6 domain. Intrachain disulfides connect Cys57–Cys84, Cys60–Cys69, Cys76–Cys102, Cys111–Cys128, and Cys129–Cys134. A glycan (N-linked (GlcNAc...) asparagine) is linked at Asn91.

Forms oligomers. N-glycosylated. In terms of tissue distribution, expression restricted to the caput of epididymis. Detected only from day 24 postnatum.

The protein resides in the secreted. Its function is as follows. May have a role in hematopoietic cell differentiation. This chain is Lymphocyte antigen 6 complex locus protein G5c (Ly6g5c), found in Rattus norvegicus (Rat).